Reading from the N-terminus, the 160-residue chain is Putative pre-16S rRNA nuclease (160 aa).

It belongs to the YqgF nuclease family.

It localises to the cytoplasm. Functionally, could be a nuclease involved in processing of the 5'-end of pre-16S rRNA. The sequence is that of Putative pre-16S rRNA nuclease from Rhodopseudomonas palustris (strain HaA2).